Here is a 218-residue protein sequence, read N- to C-terminus: Capsid protein (218 aa).

Position 1 is an N-acetylmethionine; by host (M1). The segment covering 1 to 10 (MDKSESTSAG) has biased composition (low complexity). The tract at residues 1 to 30 (MDKSESTSAGRNRRRRPRRGSRSASSSADA) is disordered. A compositionally biased stretch (basic residues) spans 11 to 21 (RNRRRRPRRGS).

It belongs to the cucumovirus capsid protein family.

It localises to the virion. Its function is as follows. Capsid protein. Probably binds RNA and plays a role in packaging. The sequence is that of Capsid protein from Cucumis sativus (Cucumber).